A 360-amino-acid chain; its full sequence is Peptide chain release factor 1 (360 aa).

The residue at position 235 (Gln235) is an N5-methylglutamine. The segment covering 280 to 293 has biased composition (basic and acidic residues); that stretch reads DKQSHEQQAKEAAT. The interval 280–300 is disordered; the sequence is DKQSHEQQAKEAATRKSLIGS.

It belongs to the prokaryotic/mitochondrial release factor family. Methylated by PrmC. Methylation increases the termination efficiency of RF1.

The protein resides in the cytoplasm. Peptide chain release factor 1 directs the termination of translation in response to the peptide chain termination codons UAG and UAA. This chain is Peptide chain release factor 1, found in Paraburkholderia xenovorans (strain LB400).